The following is a 292-amino-acid chain: Manganese transport system membrane protein MntC (292 aa).

8 consecutive transmembrane segments (helical) span residues 20–40, 58–78, 96–116, 137–157, 168–188, 190–210, 226–246, and 249–269; these read ALTAAILVGIICGVIGCFIIL, VVIAYMIGASFFIGAVITGVI, SAIGILFTAAFALGIVLITGM, TDLWVTLGIGLFVLLIIILFY, VMAQATGIPVQMIHYLLMLLL, LVTVAALQTVGIVLVVAMLIT, LCLAAMFGVISAIAGIYFSVI, and VASGASIVLVASTLFALAFFF.

This sequence belongs to the ABC-3 integral membrane protein family.

The protein resides in the cell membrane. Functionally, this protein is probably a component of a manganese permease, a binding protein-dependent, ATP-driven transport system. This is Manganese transport system membrane protein MntC (mntC) from Halalkalibacterium halodurans (strain ATCC BAA-125 / DSM 18197 / FERM 7344 / JCM 9153 / C-125) (Bacillus halodurans).